The sequence spans 93 residues: Leydig cell tumor 10 kDa protein (93 aa).

The interval 1-41 (MAQGQRKFQAQKPKSKAAAAERSRGPRKGGRVIGPKKARVV) is disordered. The segment covering 7–18 (KFQAQKPKSKAA) has biased composition (low complexity). Residues 25 to 39 (GPRKGGRVIGPKKAR) are compositionally biased toward basic residues.

It belongs to the UPF0390 family. In terms of tissue distribution, leydig cell tumor, testis and placenta.

May have a potential role in hypercalcemia of malignancy. The chain is Leydig cell tumor 10 kDa protein from Rattus norvegicus (Rat).